The following is a 234-amino-acid chain: Ubiquinone biosynthesis O-methyltransferase (234 aa).

S-adenosyl-L-methionine is bound by residues R36, G56, D77, and M125.

The protein belongs to the methyltransferase superfamily. UbiG/COQ3 family.

It carries out the reaction a 3-demethylubiquinol + S-adenosyl-L-methionine = a ubiquinol + S-adenosyl-L-homocysteine + H(+). It catalyses the reaction a 3-(all-trans-polyprenyl)benzene-1,2-diol + S-adenosyl-L-methionine = a 2-methoxy-6-(all-trans-polyprenyl)phenol + S-adenosyl-L-homocysteine + H(+). Its pathway is cofactor biosynthesis; ubiquinone biosynthesis. O-methyltransferase that catalyzes the 2 O-methylation steps in the ubiquinone biosynthetic pathway. This chain is Ubiquinone biosynthesis O-methyltransferase, found in Actinobacillus pleuropneumoniae serotype 7 (strain AP76).